The chain runs to 284 residues: Acetyl-coenzyme A carboxylase carboxyl transferase subunit beta (284 aa).

One can recognise a CoA carboxyltransferase N-terminal domain in the interval 25-284 (MWVKCPGCSA…ILGILYRPAA (260 aa)). Zn(2+) is bound by residues Cys-29, Cys-32, Cys-48, and Cys-51. Residues 29–51 (CPGCSATLLAKDLDANLNVCPTC) form a C4-type zinc finger.

It belongs to the AccD/PCCB family. As to quaternary structure, acetyl-CoA carboxylase is a heterohexamer composed of biotin carboxyl carrier protein (AccB), biotin carboxylase (AccC) and two subunits each of ACCase subunit alpha (AccA) and ACCase subunit beta (AccD). Requires Zn(2+) as cofactor.

The protein resides in the cytoplasm. It catalyses the reaction N(6)-carboxybiotinyl-L-lysyl-[protein] + acetyl-CoA = N(6)-biotinyl-L-lysyl-[protein] + malonyl-CoA. It participates in lipid metabolism; malonyl-CoA biosynthesis; malonyl-CoA from acetyl-CoA: step 1/1. Its function is as follows. Component of the acetyl coenzyme A carboxylase (ACC) complex. Biotin carboxylase (BC) catalyzes the carboxylation of biotin on its carrier protein (BCCP) and then the CO(2) group is transferred by the transcarboxylase to acetyl-CoA to form malonyl-CoA. The chain is Acetyl-coenzyme A carboxylase carboxyl transferase subunit beta from Pelobacter propionicus (strain DSM 2379 / NBRC 103807 / OttBd1).